A 122-amino-acid chain; its full sequence is Large ribosomal subunit protein uL14 (122 aa).

Belongs to the universal ribosomal protein uL14 family. As to quaternary structure, part of the 50S ribosomal subunit. Forms a cluster with proteins L3 and L19. In the 70S ribosome, L14 and L19 interact and together make contacts with the 16S rRNA in bridges B5 and B8.

Functionally, binds to 23S rRNA. Forms part of two intersubunit bridges in the 70S ribosome. The chain is Large ribosomal subunit protein uL14 from Salinibacter ruber (strain DSM 13855 / M31).